Reading from the N-terminus, the 299-residue chain is Recombination-associated protein RdgC (299 aa).

Belongs to the RdgC family.

It localises to the cytoplasm. The protein localises to the nucleoid. Its function is as follows. May be involved in recombination. In Neisseria meningitidis serogroup B (strain ATCC BAA-335 / MC58), this protein is Recombination-associated protein RdgC.